The following is a 103-amino-acid chain: Carboxysome shell protein CcmK2 (103 aa).

Positions 4-90 constitute a BMC domain; that stretch reads AVGMIETRGF…PHENLEYVLP (87 aa).

This sequence belongs to the bacterial microcompartments protein family. CcmK subfamily. In terms of assembly, homohexamer, might also make dodecamers. Interacts with full-length CcmM. Forms mixed heterohexamers of all possible stoichiometries with CcmK1, which might form dodecamers. Only very weak interactions with CcmK3 and CcmK4 were seen.

It is found in the carboxysome. Its function is as follows. One of the shell proteins of the carboxysome, a polyhedral inclusion where RuBisCO (ribulose bisphosphate carboxylase, rbcL-rbcS) is sequestered. The central pore probably regulates metabolite flux. Hexamers make sheets that form the facets of the polyhedral carboxysome. In Synechocystis sp. (strain ATCC 27184 / PCC 6803 / Kazusa), this protein is Carboxysome shell protein CcmK2.